We begin with the raw amino-acid sequence, 257 residues long: UPF0246 protein Mpe_A2092 (257 aa).

It belongs to the UPF0246 family.

This chain is UPF0246 protein Mpe_A2092, found in Methylibium petroleiphilum (strain ATCC BAA-1232 / LMG 22953 / PM1).